A 61-amino-acid chain; its full sequence is UPF0312 protein (61 aa).

The protein belongs to the UPF0312 family.

This is UPF0312 protein from Delftia acidovorans (Pseudomonas acidovorans).